The sequence spans 308 residues: Glycine--tRNA ligase alpha subunit (308 aa).

Belongs to the class-II aminoacyl-tRNA synthetase family. Tetramer of two alpha and two beta subunits.

It localises to the cytoplasm. It carries out the reaction tRNA(Gly) + glycine + ATP = glycyl-tRNA(Gly) + AMP + diphosphate. This chain is Glycine--tRNA ligase alpha subunit, found in Brevibacillus brevis (strain 47 / JCM 6285 / NBRC 100599).